The sequence spans 254 residues: HTH-type transcriptional repressor DasR (254 aa).

Positions 17 to 87 (RTARVPKYYR…QGKGTFVAKP (71 aa)) constitute an HTH gntR-type domain. The segment at residues 47-66 (ERTLAAEFDTSRTTVRQALQ) is a DNA-binding region (H-T-H motif).

It is found in the cytoplasm. Binding to the target genes is abolished by GlcN6P, a central molecule in N-acetylglucosamine metabolism. Its function is as follows. Global regulator that is part of the nutrient-sensing system. In the absence of glucosamine 6-P (GlcN6P), represses the phosphotransferase system (PTS) specific for the uptake of N-acetylglucosamine (PTSNag), and genes involved in the metabolism of chitin, as well as several genes involved in development, thereby linking carbon availability to morphogenesis. Also regulates the expression of the ABC transporters DasABC and NgcEFG, which are involved in N,N'-diacetylchitobiose ((GlcNAc)2) uptake. Binds to the DNA consensus sequence 5'-ACTGGTCTAGACCACT-3'. The protein is HTH-type transcriptional repressor DasR (dasR) of Streptomyces coelicolor (strain ATCC BAA-471 / A3(2) / M145).